Here is a 148-residue protein sequence, read N- to C-terminus: Large ribosomal subunit protein bL9 (148 aa).

It belongs to the bacterial ribosomal protein bL9 family.

Binds to the 23S rRNA. The protein is Large ribosomal subunit protein bL9 of Frankia casuarinae (strain DSM 45818 / CECT 9043 / HFP020203 / CcI3).